Reading from the N-terminus, the 295-residue chain is Methionine aminopeptidase (295 aa).

H62 contacts substrate. D82, D93, and H153 together coordinate a divalent metal cation. H161 contributes to the substrate binding site. A divalent metal cation contacts are provided by E187 and E280.

It belongs to the peptidase M24A family. Methionine aminopeptidase archaeal type 2 subfamily. As to quaternary structure, monomer. Co(2+) serves as cofactor. Zn(2+) is required as a cofactor. It depends on Mn(2+) as a cofactor. Requires Fe(2+) as cofactor.

The enzyme catalyses Release of N-terminal amino acids, preferentially methionine, from peptides and arylamides.. Removes the N-terminal methionine from nascent proteins. The N-terminal methionine is often cleaved when the second residue in the primary sequence is small and uncharged (Met-Ala-, Cys, Gly, Pro, Ser, Thr, or Val). The polypeptide is Methionine aminopeptidase (Pyrococcus abyssi (strain GE5 / Orsay)).